The chain runs to 505 residues: ATP synthase subunit alpha (505 aa).

Residue 171 to 178 participates in ATP binding; sequence GDRQTGKT.

This sequence belongs to the ATPase alpha/beta chains family. F-type ATPases have 2 components, CF(1) - the catalytic core - and CF(0) - the membrane proton channel. CF(1) has five subunits: alpha(3), beta(3), gamma(1), delta(1), epsilon(1). CF(0) has three main subunits: a(1), b(2) and c(9-12). The alpha and beta chains form an alternating ring which encloses part of the gamma chain. CF(1) is attached to CF(0) by a central stalk formed by the gamma and epsilon chains, while a peripheral stalk is formed by the delta and b chains.

The protein resides in the cell inner membrane. It carries out the reaction ATP + H2O + 4 H(+)(in) = ADP + phosphate + 5 H(+)(out). Functionally, produces ATP from ADP in the presence of a proton gradient across the membrane. The alpha chain is a regulatory subunit. This chain is ATP synthase subunit alpha, found in Campylobacter hominis (strain ATCC BAA-381 / DSM 21671 / CCUG 45161 / LMG 19568 / NCTC 13146 / CH001A).